The sequence spans 437 residues: Xylose isomerase (437 aa).

Residues His101 and Asp104 contribute to the active site. 7 residues coordinate Mg(2+): Glu232, Glu268, His271, Asp296, Asp307, Asp309, and Asp339.

Belongs to the xylose isomerase family. Homotetramer. It depends on Mg(2+) as a cofactor.

The protein resides in the cytoplasm. It catalyses the reaction alpha-D-xylose = alpha-D-xylulofuranose. The polypeptide is Xylose isomerase (Mannheimia succiniciproducens (strain KCTC 0769BP / MBEL55E)).